The sequence spans 100 residues: Thioredoxin (100 aa).

Residues 1-100 (MKHITNKAEL…PKNELKELLK (100 aa)) form the Thioredoxin domain. A disulfide bridge connects residues Cys-29 and Cys-32.

The protein belongs to the thioredoxin family.

Participates in various redox reactions through the reversible oxidation of its active center dithiol to a disulfide and catalyzes dithiol-disulfide exchange reactions. This Mycoplasmoides gallisepticum (strain R(low / passage 15 / clone 2)) (Mycoplasma gallisepticum) protein is Thioredoxin (trxA).